Consider the following 478-residue polypeptide: UDP-N-acetylmuramate--L-alanine ligase (478 aa).

Residue 130–136 (GTHGKTT) participates in ATP binding.

This sequence belongs to the MurCDEF family.

It is found in the cytoplasm. It carries out the reaction UDP-N-acetyl-alpha-D-muramate + L-alanine + ATP = UDP-N-acetyl-alpha-D-muramoyl-L-alanine + ADP + phosphate + H(+). Its pathway is cell wall biogenesis; peptidoglycan biosynthesis. Cell wall formation. This Microcystis aeruginosa (strain NIES-843 / IAM M-2473) protein is UDP-N-acetylmuramate--L-alanine ligase.